We begin with the raw amino-acid sequence, 139 residues long: Small ribosomal subunit protein bS6 (139 aa).

The disordered stretch occupies residues 97–139 (TEASPMAKAKDERDSRRSSEGERRSAPAEATEEVKETAEKAAE). Basic and acidic residues predominate over residues 104 to 139 (KAKDERDSRRSSEGERRSAPAEATEEVKETAEKAAE).

The protein belongs to the bacterial ribosomal protein bS6 family.

Binds together with bS18 to 16S ribosomal RNA. The sequence is that of Small ribosomal subunit protein bS6 from Shewanella sediminis (strain HAW-EB3).